The chain runs to 128 residues: Large ribosomal subunit protein bL17 (128 aa).

This sequence belongs to the bacterial ribosomal protein bL17 family. Part of the 50S ribosomal subunit. Contacts protein L32.

This Streptococcus suis (strain 98HAH33) protein is Large ribosomal subunit protein bL17.